The primary structure comprises 435 residues: Cytochrome c biogenesis protein Ccs1 (435 aa).

A run of 3 helical transmembrane segments spans residues 17-37 (LSLS…GTII), 77-97 (NPCF…CTFS), and 163-183 (IAPI…LISL).

The protein belongs to the Ccs1/CcsB family. In terms of assembly, may interact with CcsA.

Its subcellular location is the plastid. It localises to the chloroplast thylakoid membrane. Its function is as follows. Required during biogenesis of c-type cytochromes (cytochrome c6 and cytochrome f) at the step of heme attachment. The polypeptide is Cytochrome c biogenesis protein Ccs1 (Gracilaria tenuistipitata var. liui (Red alga)).